Reading from the N-terminus, the 184-residue chain is Ribosome-recycling factor (184 aa).

This sequence belongs to the RRF family.

It localises to the cytoplasm. Functionally, responsible for the release of ribosomes from messenger RNA at the termination of protein biosynthesis. May increase the efficiency of translation by recycling ribosomes from one round of translation to another. This is Ribosome-recycling factor from Cutibacterium acnes (strain DSM 16379 / KPA171202) (Propionibacterium acnes).